Reading from the N-terminus, the 398-residue chain is Acetate kinase (398 aa).

A Mg(2+)-binding site is contributed by Asn8. Lys15 is an ATP binding site. Position 92 (Arg92) interacts with substrate. Asp149 acts as the Proton donor/acceptor in catalysis. ATP-binding positions include His209–Gly213, Asp283–Arg285, and Gly331–Asn335. Glu385 provides a ligand contact to Mg(2+).

The protein belongs to the acetokinase family. As to quaternary structure, homodimer. The cofactor is Mg(2+). Requires Mn(2+) as cofactor.

The protein resides in the cytoplasm. It catalyses the reaction acetate + ATP = acetyl phosphate + ADP. It functions in the pathway metabolic intermediate biosynthesis; acetyl-CoA biosynthesis; acetyl-CoA from acetate: step 1/2. Functionally, catalyzes the formation of acetyl phosphate from acetate and ATP. Can also catalyze the reverse reaction. The sequence is that of Acetate kinase from Corynebacterium efficiens (strain DSM 44549 / YS-314 / AJ 12310 / JCM 11189 / NBRC 100395).